Reading from the N-terminus, the 471-residue chain is Metal tolerance protein C1 (471 aa).

Over 1-78 the chain is Cytoplasmic; sequence MGIIRFQILN…PGEEGEKIFR (78 aa). The helical transmembrane segment at 79–99 threads the bilayer; that stretch reads LGLTADIGLSVAKALTGYLCG. Residues 100–101 lie on the Vacuolar side of the membrane; sequence ST. The chain crosses the membrane as a helical span at residues 102–122; that stretch reads AIIADAAHSVSDVVLSGVALV. The Cytoplasmic portion of the chain corresponds to 123–144; the sequence is SYRAANVPKDKEHPYGHGKFET. Residues 145–165 traverse the membrane as a helical segment; the sequence is LGALGISAMLLATGSGIAWHA. At 166 to 192 the chain is on the vacuolar side; sequence LDLLSIALSAAPEVIHSGHHHGIDMNH. A helical membrane pass occupies residues 193–213; the sequence is PILALTVTIASISIKEGLYWI. At 214–236 the chain is on the cytoplasmic side; sequence TKRAGEKQGSGLMMANAWHHRSD. Residues 237 to 257 form a helical membrane-spanning segment; sequence AISSLVALVGVGGSILGVNFL. Over 258–423 the chain is Vacuolar; the sequence is DPLAGLVVST…RITPHLLHSK (166 aa). The helical transmembrane segment at 424 to 444 threads the bilayer; that stretch reads ILLQIVVAMPSTMSIQDVMIA. Residues 445 to 471 are Cytoplasmic-facing; it reads AEHAEKEILKAAPNVARVSIQLSLNSE.

This sequence belongs to the cation diffusion facilitator (CDF) transporter (TC 2.A.4) family.

It is found in the vacuole membrane. In terms of biological role, involved in sequestration of excess metal in the cytoplasm into vacuoles to maintain metal homeostasis. In Arabidopsis thaliana (Mouse-ear cress), this protein is Metal tolerance protein C1 (MTPC1).